A 275-amino-acid polypeptide reads, in one-letter code: Formamidopyrimidine-DNA glycosylase (275 aa).

The active-site Schiff-base intermediate with DNA is P2. E3 (proton donor) is an active-site residue. K58 serves as the catalytic Proton donor; for beta-elimination activity. DNA-binding residues include H91 and R110. The FPG-type zinc finger occupies 238–272 (QVYGQTGKPCPRCGQAIVKLKVGGRGTHICPKCQK). The active-site Proton donor; for delta-elimination activity is R262.

Belongs to the FPG family. Monomer. Zn(2+) serves as cofactor.

The enzyme catalyses Hydrolysis of DNA containing ring-opened 7-methylguanine residues, releasing 2,6-diamino-4-hydroxy-5-(N-methyl)formamidopyrimidine.. The catalysed reaction is 2'-deoxyribonucleotide-(2'-deoxyribose 5'-phosphate)-2'-deoxyribonucleotide-DNA = a 3'-end 2'-deoxyribonucleotide-(2,3-dehydro-2,3-deoxyribose 5'-phosphate)-DNA + a 5'-end 5'-phospho-2'-deoxyribonucleoside-DNA + H(+). Involved in base excision repair of DNA damaged by oxidation or by mutagenic agents. Acts as a DNA glycosylase that recognizes and removes damaged bases. Has a preference for oxidized purines, such as 7,8-dihydro-8-oxoguanine (8-oxoG). Has AP (apurinic/apyrimidinic) lyase activity and introduces nicks in the DNA strand. Cleaves the DNA backbone by beta-delta elimination to generate a single-strand break at the site of the removed base with both 3'- and 5'-phosphates. This is Formamidopyrimidine-DNA glycosylase from Streptococcus pyogenes serotype M28 (strain MGAS6180).